The primary structure comprises 354 residues: MVNTQAREDLHIRLEETQLLDRDCTTLSRHVLQQLHFSPDAQDISSLMNRIGLAGKLIARRLTRAGLLEDTLGFTGTVNVQGESVKKMDIYANDVFISVFKQSGLVCRLASEEMEKPYYIPENCPIGRYTLLYDPLDGSSNLDTNLNVGSIFSVRQQEGNDENGLAQDLLQNGHKQIAAGYILYGPSTMLVYSIGQGVHAFTLDPSLGEFILVNENIKIPEHGPVYSVNEGNFWQWDDSMRDYIRYVHRHEGYTARYGGALVGDFHRILYQGGVFLYPGTVKKPEGKLRLLYESAPMGYLVEQAGGRASTGTEEILDVVADQLHQRTPLIIGSKEDVALVESFIKEQKRISNQG.

Glu112, Asp134, Leu136, and Asp137 together coordinate Mg(2+). Substrate is bound by residues 137–140 (DGSS), Asn229, Tyr257, and Lys287. Glu293 is a binding site for Mg(2+).

Belongs to the FBPase class 1 family. Homotetramer. Mg(2+) is required as a cofactor.

It localises to the cytoplasm. The catalysed reaction is beta-D-fructose 1,6-bisphosphate + H2O = beta-D-fructose 6-phosphate + phosphate. Its pathway is carbohydrate biosynthesis; Calvin cycle. This is Fructose-1,6-bisphosphatase class 1 from Trichodesmium erythraeum (strain IMS101).